The sequence spans 735 residues: Polycomb protein sop-2 (735 aa).

A compositionally biased stretch (polar residues) spans 1-15; that stretch reads MSSNLTSNEMSSTSA. Disordered stretches follow at residues 1-59, 223-288, and 300-534; these read MSSN…SSSS, AARS…APAA, and PQES…PVLQ. Residues 224–503 form an RNA-binding region; the sequence is ARSSRMAARR…APATPATPAS (280 aa). Residues 239 to 288 are compositionally biased toward low complexity; it reads YRGAFRGAARGAPSRRPAPAAEVAPETPVAAPMAPAAPAAPATPEAAPAA. Basic and acidic residues-rich tracts occupy residues 317-355 and 389-398; these read DTSKEGEASRPTSEKKKKIRTTEMDRLMSMDLGPKDGGR and RAAEKKKPED. Residues 399 to 413 are compositionally biased toward acidic residues; the sequence is SDAAEEQEVEMEVDN. Residues 450–470 are compositionally biased toward basic and acidic residues; sequence VEPKKEPVDEPAEKIPKRSEA. A compositionally biased stretch (low complexity) spans 471 to 504; that stretch reads APEVPATATTKEAPPSTSSSPPDAPATPATPASS. Residues 520–534 show a composition bias toward polar residues; it reads LTGSPPESETPPVLQ. The tract at residues 621 to 712 is SAM-like; that stretch reads LVENNHEATL…YGTEVLNHYR (92 aa).

As to quaternary structure, homodimer. Interacts with ubc-9. Binds through its N-terminal region to the N-terminal region of sor-1. In terms of processing, sumoylated by ubc-9. Sumoylation is required for the transcriptional regulation of homeotic genes. Widely expressed. Weakly expressed in most somatic cells of 50-cell stage embryos. At 200 cell stage, it is strongly expressed. By comma stage, it is expressed in most somatic cells.

The protein localises to the nucleus. Its function is as follows. Polycomb group (PcG) protein. PcG proteins act by forming multiprotein complexes, which are required to maintain the transcriptionally repressive state of homeotic genes throughout development. PcG proteins are not required to initiate repression, but to maintain it during later stages of development. Also required to repress expression of other genes and for localization of sor-1. Binds RNA. The sequence is that of Polycomb protein sop-2 (sop-2) from Caenorhabditis elegans.